The sequence spans 280 residues: Succinate dehydrogenase [ubiquinone] iron-sulfur subunit, mitochondrial (280 aa).

The N-terminal 28 residues, 1 to 28 (MAAVVALSLRRRFPAAALGGARLQACRG), are a transit peptide targeting the mitochondrion. One can recognise a 2Fe-2S ferredoxin-type domain in the interval 40–133 (KKFAIYRWDP…VSKIYPLPHM (94 aa)). Residues Lys-51 and Lys-55 each carry the N6-acetyllysine modification. [2Fe-2S] cluster contacts are provided by Cys-93, Cys-98, Cys-101, and Cys-113. The interaction with SDHAF1 stretch occupies residues 146–218 (FYAQYKSIEP…PAVLMQAYRW (73 aa)). The 4Fe-4S ferredoxin-type domain maps to 176–206 (DREKLDGLYECILCACCSTSCPSYWWNGDKY). [4Fe-4S] cluster-binding residues include Cys-186, Cys-189, and Cys-192. Residue Cys-196 coordinates [3Fe-4S] cluster. Position 201 (Trp-201) interacts with a ubiquinone. The [3Fe-4S] cluster site is built by Cys-243 and Cys-249. Cys-253 provides a ligand contact to [4Fe-4S] cluster.

The protein belongs to the succinate dehydrogenase/fumarate reductase iron-sulfur protein family. Component of complex II composed of four subunits: the flavoprotein (FP) SDHA, iron-sulfur protein (IP) SDHB, and a cytochrome b560 composed of SDHC and SDHD. Interacts with SDHAF1; the interaction is required for iron-sulfur cluster incorporation into SDHB. [2Fe-2S] cluster is required as a cofactor. It depends on [3Fe-4S] cluster as a cofactor. [4Fe-4S] cluster serves as cofactor.

It is found in the mitochondrion inner membrane. The catalysed reaction is a quinone + succinate = fumarate + a quinol. It carries out the reaction (R)-malate + a quinone = enol-oxaloacetate + a quinol. The enzyme catalyses (S)-malate + a quinone = enol-oxaloacetate + a quinol. Its pathway is carbohydrate metabolism; tricarboxylic acid cycle; fumarate from succinate (eukaryal route): step 1/1. Enol-oxaloacetate inhibits the succinate dehydrogenase activity. Functionally, iron-sulfur protein (IP) subunit of the succinate dehydrogenase complex (mitochondrial respiratory chain complex II), responsible for transferring electrons from succinate to ubiquinone (coenzyme Q). SDH also oxidizes malate to the non-canonical enol form of oxaloacetate, enol-oxaloacetate. Enol-oxaloacetate, which is a potent inhibitor of the succinate dehydrogenase activity, is further isomerized into keto-oxaloacetate. The chain is Succinate dehydrogenase [ubiquinone] iron-sulfur subunit, mitochondrial (SDHB) from Bos taurus (Bovine).